Here is a 101-residue protein sequence, read N- to C-terminus: Urease subunit beta (101 aa).

It belongs to the urease beta subunit family. In terms of assembly, heterotrimer of UreA (gamma), UreB (beta) and UreC (alpha) subunits. Three heterotrimers associate to form the active enzyme.

It is found in the cytoplasm. It catalyses the reaction urea + 2 H2O + H(+) = hydrogencarbonate + 2 NH4(+). It functions in the pathway nitrogen metabolism; urea degradation; CO(2) and NH(3) from urea (urease route): step 1/1. The protein is Urease subunit beta of Actinobacillus pleuropneumoniae serotype 5b (strain L20).